The following is a 3008-amino-acid chain: Genome polyprotein (3008 aa).

Ser-2 bears the N-acetylserine; by host mark. The interaction with STAT1 stretch occupies residues 2–23; sequence STNPKPQRKTKRNTNRRPMDVK. Residues 2–58 are interaction with EIF2AK2/PKR; it reads STNPKPQRKTKRNTNRRPMDVKFPGGGQIVGGVYLLPRRGPRLGVRATRKTSERSQP. The interaction with DDX3X stretch occupies residues 2 to 59; sequence STNPKPQRKTKRNTNRRPMDVKFPGGGQIVGGVYLLPRRGPRLGVRATRKTSERSQPR. The disordered stretch occupies residues 2–75; it reads STNPKPQRKT…PKARRPEGRS (74 aa). At 2–168 the chain is on the cytoplasmic side; the sequence is STNPKPQRKT…EDGINYATGN (167 aa). Short sequence motifs (nuclear localization signal) lie at residues 5–13 and 38–43; these read PKPQRKTKR and PRRGPR. Positions 7–16 are enriched in basic residues; that stretch reads PQRKTKRNTN. Low complexity predominate over residues 32 to 47; it reads GGVYLLPRRGPRLGVR. The residue at position 53 (Ser-53) is a Phosphoserine; by host. Short sequence motifs (nuclear localization signal) lie at residues 58-64 and 66-71; these read PRGRRQP and PKARRP. The span at 58–68 shows a compositional bias: basic residues; that stretch reads PRGRRQPIPKA. Phosphoserine; by host occurs at positions 99 and 116. The interval 112-152 is important for endoplasmic reticulum and mitochondrial localization; sequence PRGRSRNLGKVIDTLTCGFADLMGYIPLVGAPVGSVARALA. The interaction with APOA2 stretch occupies residues 122-173; that stretch reads VIDTLTCGFADLMGYIPLVGAPVGSVARALAHGVRALEDGINYATGNLPGCS. Residues 164–167 are important for lipid droplets localization; it reads YATG. The chain crosses the membrane as a helical span at residues 169 to 189; that stretch reads LPGCSFSIFLLALLSCLTVPA. Residues 178-191 constitute a propeptide, ER anchor for the core protein, removed in mature form by host signal peptidase; it reads LLALLSCLTVPASA. Topologically, residues 190–358 are lumenal; that stretch reads SAVNYRNVSG…SGGHWGVLVG (169 aa). N-linked (GlcNAc...) asparagine; by host glycosylation is found at Asn-196, Asn-209, and Asn-234. The segment at 265–296 is important for fusion; it reads MVGAATVCSGLYIGDLCGGLFLVGQMFSFRPR. An N-linked (GlcNAc...) asparagine; by host glycan is attached at Asn-305. The chain crosses the membrane as a helical span at residues 359–379; sequence VAYFSMQANWAKVILVLFLFA. Residues 380–725 are Lumenal-facing; sequence GVDAETHVSG…WEYVVLAFLL (346 aa). Residues 385–412 are HVR1; that stretch reads THVSGAAVGRSTAGLANLFSSGSKQNLQ. 3 N-linked (GlcNAc...) (high mannose) asparagine; by host glycosylation sites follow: Asn-417, Asn-423, and Asn-430. 4 disulfide bridges follow: Cys-429–Cys-553, Cys-452–Cys-459, Cys-487–Cys-495, and Cys-504–Cys-509. Asn-448 carries N-linked (GlcNAc...) asparagine; by host glycosylation. Positions 475–479 are HVR2; sequence ANISG. An N-linked (GlcNAc...) asparagine; by host glycan is attached at Asn-476. The tract at residues 481 to 494 is CD81-binding 1; it reads SDDRPYCWHYAPRP. Asn-533 is a glycosylation site (N-linked (GlcNAc...) asparagine; by host). The tract at residues 545 to 552 is CD81-binding 2; it reads PPHGAWFG. Asn-557 carries N-linked (GlcNAc...) asparagine; by host glycosylation. 4 disulfide bridges follow: Cys-565–Cys-570, Cys-581–Cys-585, Cys-597–Cys-620, and Cys-607–Cys-644. Asn-623 and Asn-645 each carry an N-linked (GlcNAc...) (high mannose) asparagine; by host glycan. A disulfide bridge connects residues Cys-652 and Cys-677. The PKR/eIF2-alpha phosphorylation homology domain (PePHD) stretch occupies residues 660–671; that stretch reads VELSPLLLTTTA. The helical transmembrane segment at 726-746 threads the bilayer; sequence LADARVSAYLWMMFMVSQVEA. The Lumenal segment spans residues 747 to 757; sequence ALSNLININAA. A helical membrane pass occupies residues 758-778; that stretch reads SAAGAQGFWYAILFICIVWHV. The Cytoplasmic segment spans residues 779 to 782; that stretch reads KGRF. The helical transmembrane segment at 783–803 threads the bilayer; that stretch reads PAAAAYAACGLWPCFLLLLML. Residues 804–813 lie on the Lumenal side of the membrane; it reads PERAYAYDQE. Residues 814–834 traverse the membrane as a helical segment; the sequence is VAGSLGGAIVVMLTILTLSPH. At 835–881 the chain is on the cytoplasmic side; the sequence is YKLWLARGLWWIQYFIARTEAVLHVYIPSFNVRGPRDSVIVLAVLVC. Residues 882 to 902 form a helical membrane-spanning segment; it reads PDLVFDITKYLLAILGPLHIL. The Lumenal segment spans residues 903-928; it reads QASLLRIPYFVRAQALVKICSLLRGV. The Peptidase C18 domain maps to 903–1026; that stretch reads QASLLRIPYF…TETSKGWRLL (124 aa). The tract at residues 904–1206 is protease NS2-3; that stretch reads ASLLRIPYFV…PVESLETTMR (303 aa). The S-palmitoyl cysteine; by host moiety is linked to residue Cys-922. The helical transmembrane segment at 929–949 threads the bilayer; that stretch reads VYGKYFQMVVLKSRGLTGTYI. The segment at 929–949 is interaction with host SCPS1; the sequence is VYGKYFQMVVLKSRGLTGTYI. The Cytoplasmic portion of the chain corresponds to 950–1657; it reads YDHLTPMSDW…CMSADLEVVT (708 aa). Residues His-952, Glu-972, and Cys-993 each act as for protease NS2 activity; shared with dimeric partner in the active site. The Peptidase S29 domain occupies 1027–1208; the sequence is APITAYAQQT…ESLETTMRSP (182 aa). Residues His-1083 and Asp-1107 each act as charge relay system; for serine protease NS3 activity in the active site. Zn(2+)-binding residues include Cys-1123 and Cys-1125. Ser-1165 acts as the Charge relay system; for serine protease NS3 activity in catalysis. 2 residues coordinate Zn(2+): Cys-1171 and His-1175. A Helicase ATP-binding domain is found at 1217 to 1369; that stretch reads PAVPQTYQVA…SNIEEVALPT (153 aa). Position 1230–1237 (1230–1237) interacts with ATP; the sequence is APTGSGKS. 2 residues coordinate Mg(2+): Ser-1237 and Glu-1317. The DECH box signature appears at 1316–1319; it reads DECY. Residues 1486–1498 form an RNA-binding region; the sequence is QRRGRTGRGRLGT. A helical membrane pass occupies residues 1658–1678; that stretch reads STWVLVGGVLAALAAYCLSVG. Residues 1679-1690 are NS3-binding; sequence SVVIVGRVVLSG. The Cytoplasmic portion of the chain corresponds to 1679-1805; the sequence is SVVIVGRVVL…AVTSPLTTQQ (127 aa). A helical transmembrane segment spans residues 1806–1826; sequence TLLFNILGGWVASQIRDSDAS. The Lumenal portion of the chain corresponds to 1827-1828; it reads TA. The helical transmembrane segment at 1829 to 1849 threads the bilayer; that stretch reads FVVSGLAGAAVGSVGLGKILV. A topological domain (cytoplasmic) is located at residue Asp-1850. A helical transmembrane segment spans residues 1851–1871; it reads ILPGYGAGVRGAVVTFKIMSG. Topologically, residues 1872–1881 are lumenal; it reads EMPSTEDLVN. The helical transmembrane segment at 1882–1902 threads the bilayer; sequence LLPAILSPGALVVEVVCPAIL. At 1903–1972 the chain is on the cytoplasmic side; sequence RRHVGPGEGA…WINEDCSTPC (70 aa). Residue Cys-1972 is the site of S-palmitoyl cysteine; by host attachment. An intramembrane segment occupies 1973–2002; sequence AESWLWEVWDWVLHVLSDFKTCLKAKFVPL. The Cytoplasmic portion of the chain corresponds to 2003–2987; the sequence is MPGIPLLSWP…YHSMSHARPR (985 aa). Zn(2+)-binding residues include Cys-2029, Cys-2031, and Cys-2052. Positions 2120-2208 are FKBP8-binding; sequence ELFTEVDGIR…ASSSASQLSP (89 aa). Positions 2120-2329 are transcriptional activation; it reads ELFTEVDGIR…PVPSPRRKRT (210 aa). Residues 2135-2139 are interaction with non-structural protein 4A; sequence PKCKP. The interaction with host SKP2 stretch occupies residues 2189 to 2435; it reads RLARGSRPSL…ALVTPCAAEE (247 aa). Residues Ser-2194, Ser-2197, Ser-2201, Ser-2204, and Ser-2207 each carry the phosphoserine; by host modification. An ISDR region spans residues 2210-2245; it reads LLQATCTAPHDSPGTDLLEANLLWGSTATRVETDEK. The interval 2210 to 2272 is interaction with EIF2AK2/PKR; it reads LLQATCTAPH…REVSVAAEIL (63 aa). The NS4B-binding stretch occupies residues 2245-2303; sequence KVIILDSFESCVAEQNDDREVSVAAEILRPTKKFPPALPIWARPDYNPPLTETWKQQDY. The V3 stretch occupies residues 2296-2373; that stretch reads ETWKQQDYQA…TPTETTDSGP (78 aa). The SH3-binding motif lies at 2319–2322; the sequence is PPVP. The Nuclear localization signal motif lies at 2324–2332; that stretch reads PRRKRTVQL. Residues 2346–2406 are disordered; it reads AKTFGQSEPS…DPDLTSDSWS (61 aa). Lys-2347 is covalently cross-linked (Glycyl lysine isopeptide (Lys-Gly) (interchain with G-Cter in ubiquitin)). Ser-2446 carries the phosphoserine; by host modification. The 119-residue stretch at 2631 to 2749 folds into the RdRp catalytic domain; sequence PMGFSYDTRC…IAESDGVEED (119 aa). 3 residues coordinate Mg(2+): Asp-2637, Asp-2735, and Asp-2736. A helical membrane pass occupies residues 2988 to 3008; it reads YLLLCLLILTVGVGIFLLPAR.

The protein belongs to the hepacivirus polyprotein family. In terms of assembly, homooligomer. Interacts with E1 (via C-terminus). Interacts with the non-structural protein 5A. Interacts (via N-terminus) with host STAT1 (via SH2 domain); this interaction results in decreased STAT1 phosphorylation and ubiquitin-mediated proteasome-dependent STAT1 degradation, leading to decreased IFN-stimulated gene transcription. Interacts with host STAT3; this interaction constitutively activates STAT3. Interacts with host LTBR receptor. Interacts with host TNFRSF1A receptor and possibly induces apoptosis. Interacts with host HNRPK. Interacts with host YWHAE. Interacts with host UBE3A/E6AP. Interacts with host DDX3X. Interacts with host APOA2. Interacts with host RXRA protein. Interacts with host SP110 isoform 3/Sp110b; this interaction sequesters the transcriptional corepressor SP110 away from the nucleus. Interacts with host CREB3 nuclear transcription protein; this interaction triggers cell transformation. Interacts with host ACY3. Interacts with host C1QR1. Interacts with host RBM24; this interaction, which enhances the interaction of the mature core protein with 5'-UTR, may inhibit viral translation and favor replication. Interacts with host EIF2AK2/PKR; this interaction induces the autophosphorylation of EIF2AK2. Part of the viral assembly initiation complex composed of NS2, E1, E2, NS3, NS4A, NS5A and the mature core protein. Forms a heterodimer with envelope glycoprotein E2. Interacts with mature core protein. Interacts with protease NS2. The heterodimer E1/E2 interacts with host CLDN1; this interaction plays a role in viral entry into host cell. Interacts with host SPSB2 (via C-terminus). Part of the viral assembly initiation complex composed of NS2, E1, E2, NS3, NS4A, NS5A and the mature core protein. Interacts with host NEURL3; this interaction prevents E1 binding to glycoprotein E2. As to quaternary structure, forms a heterodimer with envelope glycoprotein E1. Interacts with host CD81 and SCARB1 receptors; these interactions play a role in viral entry into host cell. Interacts with host EIF2AK2/PKR; this interaction inhibits EIF2AK2 and probably allows the virus to evade the innate immune response. Interacts with host CD209/DC-SIGN and CLEC4M/DC-SIGNR. Interact with host SPCS1; this interaction is essential for viral particle assembly. Interacts with protease NS2. The heterodimer E1/E2 interacts with host CLDN1; this interaction plays a role in viral entry into host cell. Part of the viral assembly initiation complex composed of NS2, E1, E2, NS3, NS4A, NS5A and the mature core protein. Interacts with host SLC3A2/4F2hc; the interaction may facilitate viral entry into host cell. Interacts with human PLSCR1. In terms of assembly, homohexamer. Homoheptamer. Interacts with protease NS2. Homodimer. Interacts with host SPCS1; this interaction is essential for viral particle assembly. Interacts with envelope glycoprotein E1. Interacts with envelope glycoprotein E2. Interacts with viroporin p7. Interacts with serine protease/helicase NS3. Part of the replication complex composed of NS2, NS3, NS4A, NS4B, NS5A and the RNA-directed RNA polymerase embedded in an ER-derived membranous web. Part of the viral assembly initiation complex composed of NS2, E1, E2, NS3, NS4A, NS5A and the mature core protein. As to quaternary structure, interacts with protease NS2. Interacts with non-structural protein 4A; this interaction stabilizes the folding of NS3 serine protease. NS3-NS4A interaction is essential for NS3 activation and allows membrane anchorage of the latter. NS3/NS4A complex also prevents phosphorylation of host IRF3, thus preventing the establishment of dsRNA induced antiviral state. Interacts with host MAVS; this interaction leads to the cleavage and inhibition of host MAVS. Interacts with host TICAM1; this interaction leads to the cleavage and inhibition of host TICAM1. Interacts with host TANK-binding kinase/TBK1; this interaction results in the inhibition of the association between TBK1 and IRF3, which leads to the inhibition of IRF3 activation. Interacts with host RBM24. Part of the replication complex composed of NS2, NS3, NS4A, NS4B, NS5A and the RNA-directed RNA polymerase embedded in an ER-derived membranous web. Part of the viral assembly initiation complex composed of NS2, E1, E2, NS3, NS4A, NS5A and the mature core protein. In terms of assembly, interacts with NS3 serine protease; this interaction stabilizes the folding of NS3 serine protease. NS3-NS4A interaction is essential for NS3 activation and allows membrane anchorage of the latter. Interacts with non-structural protein 5A (via N-terminus). Part of the replication complex composed of NS2, NS3, NS4A, NS4B, NS5A and the RNA-directed RNA polymerase embedded in an ER-derived membranous web. Part of the viral assembly initiation complex composed of NS2, E1, E2, NS3, NS4A, NS5A and the mature core protein. Homomultimer. Interacts with non-structural protein NS5A. Interacts with host PLA2G4C; this interaction likely initiates the recruitment of replication complexes to lipid droplets. Interacts with host STING; this interaction disrupts the interaction between STING and TBK1 thereby suppressing the interferon signaling. Part of the replication complex composed of NS2, NS3, NS4A, NS4B, NS5A and the RNA-directed RNA polymerase embedded in an ER-derived membranous web. As to quaternary structure, monomer. Homodimer; dimerization is required for RNA-binding. Interacts with the mature core protein. Interacts (via N-terminus) with non-structural protein 4A. Interacts with non-structural protein 4B. Interacts (via region D2) with RNA-directed RNA polymerase. Part of the viral assembly initiation complex composed of NS2, E1, E2, NS3, NS4A, NS5A and the mature core protein. Part of the replication complex composed of NS2, NS3, NS4A, NS4B, NS5A and the RNA-directed RNA polymerase embedded in an ER-derived membranous web. Interacts with host GRB2. Interacts with host BIN1. Interacts with host PIK3R1. Interacts with host SRCAP. Interacts with host FKBP8. Interacts (via C-terminus) with host VAPB (via MSP domain). Interacts with host EIF2AK2/PKR; this interaction leads to disruption of EIF2AK2 dimerization by NS5A and probably allows the virus to evade the innate immune response. Interacts (via N-terminus) with host PACSIN2 (via N-terminus); this interaction attenuates protein kinase C alpha-mediated phosphorylation of PACSIN2 by disrupting the interaction between PACSIN2 and PRKCA. Interacts (via N-terminus) with host SRC kinase (via SH2 domain). Interacts with most Src-family kinases. Interacts with host IFI27 and SKP2; promotes the ubiquitin-mediated proteasomal degradation of NS5A. Interacts with host GPS2. Interacts with host TNFRSF21; this interaction allows the modulation by the virus of JNK, p38 MAPK, STAT3, and Akt signaling pathways in a DR6-dependent manner. Interacts (via N-terminus) with host CIDEB (via N-terminus); this interaction seems to regulate the association of HCV particles with APOE. Interacts with host CHKA/Choline Kinase-alpha; CHKA bridges host PI4KA and NS5A and potentiates NS5A-stimulated PI4KA activity, which then facilitates the targeting of the ternary complex to the ER for viral replication. Interacts with host SPSB2 (via C-terminus); this interaction targets NS5A for ubiquitination and degradation. Interacts with host RAB18; this interaction may promote the association of NS5A and other replicase components with lipid droplets. Interacts (via region D2) with host PPIA/CYPA; the interaction stimulates RNA-binding ability of NS5A and is dependent on the peptidyl-prolyl cis-trans isomerase activity of PPIA/CYPA. Interacts with host TRIM14; this interaction induces the degradation of NS5A. In terms of assembly, homooligomer. Interacts with non-structural protein 5A. Interacts with host VAPB. Interacts with host PRK2/PKN2. Interacts with host HNRNPA1 and SEPT6; these interactions facilitate viral replication. Part of the replication complex composed of NS2, NS3, NS4A, NS4B, NS5A and the RNA-directed RNA polymerase. Requires Zn(2+) as cofactor. The cofactor is Mg(2+). Specific enzymatic cleavages in vivo yield mature proteins. The structural proteins, core, E1, E2 and p7 are produced by proteolytic processing by host signal peptidases. The core protein precursor is synthesized as a 23 kDa, which is retained in the ER membrane through the hydrophobic signal peptide. Cleavage by the signal peptidase releases the 21 kDa mature core protein. The cleavage of the core protein precursor occurs between aminoacids 176 and 188 but the exact cleavage site is not known. Some degraded forms of the core protein appear as well during the course of infection. The other proteins (p7, NS2, NS3, NS4A, NS4B, NS5A and NS5B) are cleaved by the viral proteases. Autoprocessing between NS2 and NS3 is mediated by the NS2 cysteine protease catalytic domain and regulated by the NS3 N-terminal domain. In terms of processing, phosphorylated by host PKC and PKA. Post-translationally, ubiquitinated; mediated by UBE3A and leading to core protein subsequent proteasomal degradation. Highly N-glycosylated. In terms of processing, palmitoylation is required for NS2/3 autoprocessing and E2 recruitment to membranes. Post-translationally, palmitoylated. This modification may play a role in its polymerization or in protein-protein interactions. Phosphorylated on serines in a basal form termed p56. p58 is a hyperphosphorylated form of p56. p56 and p58 coexist in the cell in roughly equivalent amounts. Hyperphosphorylation is dependent on the presence of NS4A. Host CSNK1A1/CKI-alpha or RPS6KB1 kinases may be responsible for NS5A phosphorylation. In terms of processing, tyrosine phosphorylation is essential for the interaction with host SRC. Post-translationally, the N-terminus is phosphorylated by host PRK2/PKN2.

The protein resides in the host endoplasmic reticulum membrane. It is found in the host mitochondrion membrane. It localises to the virion. The protein localises to the host cytoplasm. Its subcellular location is the host nucleus. The protein resides in the host lipid droplet. It is found in the virion membrane. It localises to the host mitochondrion. The protein localises to the host cell membrane. Its subcellular location is the host perinuclear region. The catalysed reaction is Hydrolysis of four peptide bonds in the viral precursor polyprotein, commonly with Asp or Glu in the P6 position, Cys or Thr in P1 and Ser or Ala in P1'.. It carries out the reaction a ribonucleoside 5'-triphosphate + H2O = a ribonucleoside 5'-diphosphate + phosphate + H(+). It catalyses the reaction ATP + H2O = ADP + phosphate + H(+). The enzyme catalyses RNA(n) + a ribonucleoside 5'-triphosphate = RNA(n+1) + diphosphate. Its activity is regulated as follows. Inhibited by the antiviral drug hexamethylene amiloride. Inhibition by amantadine appears to be genotype-dependent. Also inhibited by long-alkyl-chain iminosugar derivatives. Activity is up-regulated by PRK2/PKN2-mediated phosphorylation. Packages viral RNA to form a viral nucleocapsid, and promotes virion budding. Participates in the viral particle production as a result of its interaction with the non-structural protein 5A. Binds RNA and may function as a RNA chaperone to induce the RNA structural rearrangements taking place during virus replication. Modulates viral translation initiation by interacting with viral IRES and 40S ribosomal subunit. Affects various cell signaling pathways, host immunity and lipid metabolism. Prevents the establishment of cellular antiviral state by blocking the interferon-alpha/beta (IFN-alpha/beta) and IFN-gamma signaling pathways and by blocking the formation of phosphorylated STAT1 and promoting ubiquitin-mediated proteasome-dependent degradation of STAT1. Activates STAT3 leading to cellular transformation. Regulates the activity of cellular genes, including c-myc and c-fos. May repress the promoter of p53, and sequester CREB3 and SP110 isoform 3/Sp110b in the cytoplasm. Represses cell cycle negative regulating factor CDKN1A, thereby interrupting an important check point of normal cell cycle regulation. Targets transcription factors involved in the regulation of inflammatory responses and in the immune response: suppresses TNF-induced NF-kappa-B activation, and activates AP-1. Binds to dendritic cells (DCs) via C1QR1, resulting in down-regulation of T-lymphocytes proliferation. Alters lipid metabolism by interacting with hepatocellular proteins involved in lipid accumulation and storage. Induces up-regulation of FAS promoter activity, and thereby contributes to the increased triglyceride accumulation in hepatocytes (steatosis). Functionally, forms a heterodimer with envelope glycoprotein E2, which mediates virus attachment to the host cell, virion internalization through clathrin-dependent endocytosis and fusion with host membrane. Fusion with the host cell is most likely mediated by both E1 and E2, through conformational rearrangements of the heterodimer required for fusion rather than a classical class II fusion mechanism. E1/E2 heterodimer binds host apolipoproteins such as APOB and ApoE thereby forming a lipo-viro-particle (LVP). APOE associated to the LVP allows the initial virus attachment to cell surface receptors such as the heparan sulfate proteoglycans (HSPGs), syndecan-1 (SDC1), syndecan-1 (SDC2), the low-density lipoprotein receptor (LDLR) and scavenger receptor class B type I (SCARB1). The cholesterol transfer activity of SCARB1 allows E2 exposure and binding of E2 to SCARB1 and the tetraspanin CD81. E1/E2 heterodimer binding on CD81 activates the epithelial growth factor receptor (EGFR) signaling pathway. Diffusion of the complex E1-E2-EGFR-SCARB1-CD81 to the cell lateral membrane allows further interaction with Claudin 1 (CLDN1) and occludin (OCLN) to finally trigger HCV entry. In terms of biological role, forms a heterodimer with envelope glycoprotein E1, which mediates virus attachment to the host cell, virion internalization through clathrin-dependent endocytosis and fusion with host membrane. Fusion with the host cell is most likely mediated by both E1 and E2, through conformational rearrangements of the heterodimer required for fusion rather than a classical class II fusion mechanism. The interaction between envelope glycoprotein E2 and host apolipoprotein E/APOE allows the proper assembly, maturation and infectivity of the viral particles. This interaction is probably promoted via the up-regulation of cellular autophagy by the virus. E1/E2 heterodimer binds host apolipoproteins such as APOB and APOE thereby forming a lipo-viro-particle (LVP). APOE associated to the LVP allows the initial virus attachment to cell surface receptors such as the heparan sulfate proteoglycans (HSPGs), syndecan-1 (SDC1), syndecan-1 (SDC2), the low-density lipoprotein receptor (LDLR) and scavenger receptor class B type I (SCARB1). The cholesterol transfer activity of SCARB1 allows E2 exposure and binding of E2 to SCARB1 and the tetraspanin CD81. E1/E2 heterodimer binding on CD81 activates the epithelial growth factor receptor (EGFR) signaling pathway. Diffusion of the complex E1-E2-EGFR-SCARB1-CD81 to the cell lateral membrane allows further interaction with Claudin 1 (CLDN1) and occludin (OCLN) to finally trigger HCV entry. Inhibits host EIF2AK2/PKR activation, preventing the establishment of an antiviral state. Viral ligand for CD209/DC-SIGN and CLEC4M/DC-SIGNR, which are respectively found on dendritic cells (DCs), and on liver sinusoidal endothelial cells and macrophage-like cells of lymph node sinuses. These interactions allow the capture of circulating HCV particles by these cells and subsequent facilitated transmission to permissive cells such as hepatocytes and lymphocyte subpopulations. The interaction between E2 and host amino acid transporter complex formed by SLC3A2 and SLC7A5/LAT1 may facilitate viral entry into host cell. Its function is as follows. Ion channel protein that acts as a viroporin and plays an essential role in the assembly, envelopment and secretion of viral particles. Regulates the host cell secretory pathway, which induces the intracellular retention of viral glycoproteins and favors assembly of viral particles. Creates a pore in acidic organelles and releases Ca(2+) and H(+) in the cytoplasm of infected cells, leading to a productive viral infection. High levels of cytoplasmic Ca(2+) may trigger membrane trafficking and transport of viral ER-associated proteins to viroplasms, sites of viral genome replication. This ionic imbalance induces the assembly of the inflammasome complex, which triggers the maturation of pro-IL-1beta into IL-1beta through the action of caspase-1. Targets also host mitochondria and induces mitochondrial depolarization. In addition of its role as a viroporin, acts as a lipid raft adhesion factor. Cysteine protease required for the proteolytic auto-cleavage between the non-structural proteins NS2 and NS3. The N-terminus of NS3 is required for the function of NS2 protease (active region NS2-3). Promotes the initiation of viral particle assembly by mediating the interaction between structural and non-structural proteins. Functionally, displays three enzymatic activities: serine protease with a chymotrypsin-like fold, NTPase and RNA helicase. NS3 serine protease, in association with NS4A, is responsible for the cleavages of NS3-NS4A, NS4A-NS4B, NS4B-NS5A and NS5A-NS5B. The NS3/NS4A complex prevents phosphorylation of host IRF3, thus preventing the establishment of dsRNA induced antiviral state. The NS3/NS4A complex induces host amino acid transporter component SLC3A2, thus contributing to HCV propagation. NS3 RNA helicase binds to RNA and unwinds both dsDNA and dsRNA in the 3' to 5' direction, and likely resolves RNA complicated stable secondary structures in the template strand. Binds a single ATP and catalyzes the unzipping of a single base pair of dsRNA. Inhibits host antiviral proteins TBK1 and IRF3 thereby preventing the establishment of an antiviral state. Cleaves host MAVS/CARDIF thereby preventing the establishment of an antiviral state. Cleaves host TICAM1/TRIF, thereby disrupting TLR3 signaling and preventing the establishment of an antiviral state. In terms of biological role, induces a specific membrane alteration that serves as a scaffold for the virus replication complex. This membrane alteration gives rise to the so-called ER-derived membranous web that contains the replication complex. NS4B self-interaction contributes to its function in membranous web formation. Promotes host TRIF protein degradation in a CASP8-dependent manner thereby inhibiting host TLR3-mediated interferon signaling. Disrupts the interaction between STING and TBK1 contributing to the inhibition of interferon signaling. Its function is as follows. Phosphorylated protein that is indispensable for viral replication and assembly. Both hypo- and hyperphosphorylated states are required for the viral life cycle. The hyperphosphorylated form of NS5A is an inhibitor of viral replication. Involved in RNA-binding and especially in binding to the viral genome. Zinc is essential for RNA-binding. Participates in the viral particle production as a result of its interaction with the mature viral core protein. Its interaction with host VAPB may target the viral replication complex to vesicles. Down-regulates viral IRES translation initiation. Mediates interferon resistance, presumably by interacting with and inhibiting host EIF2AK2/PKR. Prevents BIN1-induced apoptosis. Acts as a transcriptional activator of some host genes important for viral replication when localized in the nucleus. Via the interaction with host PACSIN2, modulates lipid droplet formation in order to promote virion assembly. Modulates TNFRSF21/DR6 signaling pathway for viral propagation. RNA-dependent RNA polymerase that performs primer-template recognition and RNA synthesis during viral replication. Initiates RNA transcription/replication at a flavin adenine dinucleotide (FAD), resulting in a 5'- FAD cap on viral RNAs. In this way, recognition of viral 5' RNA by host pattern recognition receptors can be bypassed, thereby evading activation of antiviral pathways. This Homo sapiens (Human) protein is Genome polyprotein.